The following is a 260-amino-acid chain: Thiamine thiazole synthase (260 aa).

Residues Ala-36, 55 to 56, Gly-63, and 154 to 156 contribute to the NAD(+) site; these read EQ and HVD. Fe cation-binding residues include Asp-156 and His-171. NAD(+) is bound at residue Met-224. Residue Arg-234 coordinates glycine.

This sequence belongs to the THI4 family. In terms of assembly, homooctamer; tetramer of dimers. The cofactor is Fe(2+).

The catalysed reaction is hydrogen sulfide + glycine + NAD(+) = ADP-5-ethyl-4-methylthiazole-2-carboxylate + nicotinamide + 3 H2O + H(+). Its pathway is cofactor biosynthesis; thiamine diphosphate biosynthesis. Involved in the biosynthesis of the thiazole moiety of thiamine. Catalyzes the conversion of NAD and glycine to adenosine diphosphate 5-(2-hydroxyethyl)-4-methylthiazole-2-carboxylate (ADT), an adenylated thiazole intermediate, using free sulfide as a source of sulfur. This chain is Thiamine thiazole synthase, found in Methanosarcina mazei (strain ATCC BAA-159 / DSM 3647 / Goe1 / Go1 / JCM 11833 / OCM 88) (Methanosarcina frisia).